The primary structure comprises 304 residues: Acetyl-coenzyme A carboxylase carboxyl transferase subunit beta (304 aa).

One can recognise a CoA carboxyltransferase N-terminal domain in the interval 25–294; it reads LWIKCPETGE…KAVKRDTATE (270 aa).

It belongs to the AccD/PCCB family. Acetyl-CoA carboxylase is a heterohexamer composed of biotin carboxyl carrier protein (AccB), biotin carboxylase (AccC) and two subunits each of ACCase subunit alpha (AccA) and ACCase subunit beta (AccD).

It localises to the cytoplasm. The catalysed reaction is N(6)-carboxybiotinyl-L-lysyl-[protein] + acetyl-CoA = N(6)-biotinyl-L-lysyl-[protein] + malonyl-CoA. It functions in the pathway lipid metabolism; malonyl-CoA biosynthesis; malonyl-CoA from acetyl-CoA: step 1/1. Its function is as follows. Component of the acetyl coenzyme A carboxylase (ACC) complex. Biotin carboxylase (BC) catalyzes the carboxylation of biotin on its carrier protein (BCCP) and then the CO(2) group is transferred by the transcarboxylase to acetyl-CoA to form malonyl-CoA. The sequence is that of Acetyl-coenzyme A carboxylase carboxyl transferase subunit beta from Rhizobium meliloti (strain 1021) (Ensifer meliloti).